The chain runs to 139 residues: Small ribosomal subunit protein uS11 (139 aa).

This sequence belongs to the universal ribosomal protein uS11 family. In terms of assembly, part of the 30S ribosomal subunit.

Its function is as follows. Located on the platform of the 30S subunit. This chain is Small ribosomal subunit protein uS11, found in Pyrobaculum islandicum (strain DSM 4184 / JCM 9189 / GEO3).